Here is a 68-residue protein sequence, read N- to C-terminus: Adipokinetic prohormone type 1 (68 aa).

An N-terminal signal peptide occupies residues 1–20 (MNKIYFVIVFVACFCLFAEA). Q21 is subject to Pyrrolidone carboxylic acid. G30 bears the Glycine amide mark. The propeptide occupies 34 to 68 (SGVAPMSCKNEEAVATIFKLIQNEAERFIICQQKS).

In terms of tissue distribution, expressed in antennal lobe (AL), corpora cardiaca (CC), corpora allata (CA) and gnathal ganglion (GNG) (at protein level). Expression in CC and CA detected in all animals, expression in GNG in some animals and in AL in few animals (at protein level).

The protein localises to the secreted. Functionally, this hormone, released from cells in the corpora cardiaca, causes release of diglycerides from the fat body and stimulation of muscles to use these diglycerides as an energy source during energy-demanding processes. The chain is Adipokinetic prohormone type 1 from Agrotis ipsilon (Black cutworm moth).